The primary structure comprises 465 residues: MTSLDSILADKYPAKAHARRVAEGLKALGHSGGAIYLEAQKTRLIEDNDEPVPFRQRRPFFYLSGCLLPDSSLVYNIDSDQLTLFIPPINPDDVIWSGLPLSAAEALERYDVDNVLETTEVNATLANIAASHANNSTAFAIAEQVSEGTKFEGFSETNFNVLKGVIERTRVVKDSYEIALLRKANDISAKGHIAAIKASKSATNEREIEAAFIATCIANGAREQSYHPIVACGQNGATLHYGKNDEDLIDPVTNRRKDNVLIDAGAEYRTYCADITRAFPLNGKFLPETRQIYEIVLRMQLECIDMLKEGVQWEDVHAHAHRVAIRGLLELGILRGSEDELFDKRISVAFFPHGLGHYLGMDTHDTGGNPNYEDTDTMFRYLRVRGRLPAGSVITVEPGIYFCRFIIEPFLKNPDLQKYIDVGTLNRYWRVGGVRIEDNVHITKDGHDNLTTAPKTIEEVESLAA.

Residues aspartate 263, aspartate 274, glutamate 397, and glutamate 437 each contribute to the Mn(2+) site.

This sequence belongs to the peptidase M24B family. Mn(2+) serves as cofactor.

The catalysed reaction is Release of any N-terminal amino acid, including proline, that is linked to proline, even from a dipeptide or tripeptide.. Its function is as follows. Catalyzes the removal of a penultimate prolyl residue from the N-termini of peptides. The polypeptide is Probable Xaa-Pro aminopeptidase pepP (pepP) (Emericella nidulans (strain FGSC A4 / ATCC 38163 / CBS 112.46 / NRRL 194 / M139) (Aspergillus nidulans)).